A 158-amino-acid polypeptide reads, in one-letter code: 2-C-methyl-D-erythritol 2,4-cyclodiphosphate synthase (158 aa).

Positions 8 and 10 each coordinate a divalent metal cation. 4-CDP-2-C-methyl-D-erythritol 2-phosphate-binding positions include 8–10 (DAH) and 34–35 (HS). A divalent metal cation is bound at residue histidine 42. 4-CDP-2-C-methyl-D-erythritol 2-phosphate-binding positions include 56–58 (DIG), 132–135 (TTTE), and arginine 142.

This sequence belongs to the IspF family. In terms of assembly, homotrimer. A divalent metal cation is required as a cofactor.

It carries out the reaction 4-CDP-2-C-methyl-D-erythritol 2-phosphate = 2-C-methyl-D-erythritol 2,4-cyclic diphosphate + CMP. It participates in isoprenoid biosynthesis; isopentenyl diphosphate biosynthesis via DXP pathway; isopentenyl diphosphate from 1-deoxy-D-xylulose 5-phosphate: step 4/6. In terms of biological role, involved in the biosynthesis of isopentenyl diphosphate (IPP) and dimethylallyl diphosphate (DMAPP), two major building blocks of isoprenoid compounds. Catalyzes the conversion of 4-diphosphocytidyl-2-C-methyl-D-erythritol 2-phosphate (CDP-ME2P) to 2-C-methyl-D-erythritol 2,4-cyclodiphosphate (ME-CPP) with a corresponding release of cytidine 5-monophosphate (CMP). In Nitrosococcus oceani (strain ATCC 19707 / BCRC 17464 / JCM 30415 / NCIMB 11848 / C-107), this protein is 2-C-methyl-D-erythritol 2,4-cyclodiphosphate synthase.